Consider the following 528-residue polypeptide: Na(+)/H(+) antiporter NhaB (528 aa).

A run of 11 helical transmembrane segments spans residues 10-30 (IGNF…SFLI), 63-83 (YPLQ…MTSA), 96-116 (VLLL…LLLF), 131-165 (VSLM…FYAI), 204-224 (LLMH…VGEP), 240-260 (FVVR…LTCL), 305-325 (VLVG…VGLV), 359-379 (LAVF…APVI), 391-411 (LVIF…VFVG), 449-469 (ATPN…APLI), and 476-496 (MVWM…LAIE).

Belongs to the NhaB Na(+)/H(+) (TC 2.A.34) antiporter family.

The protein localises to the cell inner membrane. It catalyses the reaction 2 Na(+)(in) + 3 H(+)(out) = 2 Na(+)(out) + 3 H(+)(in). Its function is as follows. Na(+)/H(+) antiporter that extrudes sodium in exchange for external protons. The polypeptide is Na(+)/H(+) antiporter NhaB (Shewanella sp. (strain W3-18-1)).